We begin with the raw amino-acid sequence, 214 residues long: Imidazole glycerol phosphate synthase subunit HisH (214 aa).

Residues 3-211 enclose the Glutamine amidotransferase type-1 domain; sequence IIAVIDYDMG…VEQVQATLAT (209 aa). The active-site Nucleophile is the cysteine 81. Active-site residues include histidine 186 and glutamate 188.

As to quaternary structure, heterodimer of HisH and HisF.

It localises to the cytoplasm. The enzyme catalyses 5-[(5-phospho-1-deoxy-D-ribulos-1-ylimino)methylamino]-1-(5-phospho-beta-D-ribosyl)imidazole-4-carboxamide + L-glutamine = D-erythro-1-(imidazol-4-yl)glycerol 3-phosphate + 5-amino-1-(5-phospho-beta-D-ribosyl)imidazole-4-carboxamide + L-glutamate + H(+). It carries out the reaction L-glutamine + H2O = L-glutamate + NH4(+). It participates in amino-acid biosynthesis; L-histidine biosynthesis; L-histidine from 5-phospho-alpha-D-ribose 1-diphosphate: step 5/9. Functionally, IGPS catalyzes the conversion of PRFAR and glutamine to IGP, AICAR and glutamate. The HisH subunit catalyzes the hydrolysis of glutamine to glutamate and ammonia as part of the synthesis of IGP and AICAR. The resulting ammonia molecule is channeled to the active site of HisF. In Acaryochloris marina (strain MBIC 11017), this protein is Imidazole glycerol phosphate synthase subunit HisH.